The following is a 29-amino-acid chain: Potassium-transporting ATPase KdpF subunit (29 aa).

A helical transmembrane segment spans residues 2-22 (LIGEAVLAVVTVAVVAYLTYV).

Belongs to the KdpF family. The system is composed of three essential subunits: KdpA, KdpB and KdpC. The complex also contains KdpF, a small non-essential subunit.

The protein resides in the cell membrane. Its function is as follows. Part of the high-affinity ATP-driven potassium transport (or Kdp) system, which catalyzes the hydrolysis of ATP coupled with the electrogenic transport of potassium into the cytoplasm. This subunit may be involved in stabilization of the complex. The Kdp system is essential for growth under K(+) limitation, and for survival under desiccation and salt crystal inclusion. This Halobacterium salinarum (strain ATCC 29341 / DSM 671 / R1) protein is Potassium-transporting ATPase KdpF subunit.